The primary structure comprises 259 residues: tRNA pseudouridine synthase A (259 aa).

The active-site Nucleophile is aspartate 51. Tyrosine 109 is a binding site for substrate.

The protein belongs to the tRNA pseudouridine synthase TruA family. In terms of assembly, homodimer.

It carries out the reaction uridine(38/39/40) in tRNA = pseudouridine(38/39/40) in tRNA. Formation of pseudouridine at positions 38, 39 and 40 in the anticodon stem and loop of transfer RNAs. The chain is tRNA pseudouridine synthase A from Colwellia psychrerythraea (strain 34H / ATCC BAA-681) (Vibrio psychroerythus).